The following is a 198-amino-acid chain: dTTP/UTP pyrophosphatase (198 aa).

D76 serves as the catalytic Proton acceptor.

The protein belongs to the Maf family. YhdE subfamily. Requires a divalent metal cation as cofactor.

The protein localises to the cytoplasm. The enzyme catalyses dTTP + H2O = dTMP + diphosphate + H(+). It carries out the reaction UTP + H2O = UMP + diphosphate + H(+). Functionally, nucleoside triphosphate pyrophosphatase that hydrolyzes dTTP and UTP. May have a dual role in cell division arrest and in preventing the incorporation of modified nucleotides into cellular nucleic acids. This is dTTP/UTP pyrophosphatase from Shewanella denitrificans (strain OS217 / ATCC BAA-1090 / DSM 15013).